A 273-amino-acid chain; its full sequence is Large ribosomal subunit protein uL2 (273 aa).

Residues G222 to K273 are disordered. Positions S264–K273 are enriched in basic and acidic residues.

It belongs to the universal ribosomal protein uL2 family. Part of the 50S ribosomal subunit. Forms a bridge to the 30S subunit in the 70S ribosome.

Its function is as follows. One of the primary rRNA binding proteins. Required for association of the 30S and 50S subunits to form the 70S ribosome, for tRNA binding and peptide bond formation. It has been suggested to have peptidyltransferase activity; this is somewhat controversial. Makes several contacts with the 16S rRNA in the 70S ribosome. The sequence is that of Large ribosomal subunit protein uL2 from Syntrophobacter fumaroxidans (strain DSM 10017 / MPOB).